A 138-amino-acid polypeptide reads, in one-letter code: Small ribosomal subunit protein uS9 (138 aa).

The segment at 99 to 138 (DPDNRPPLKTEGYLTRDPRAKERKKYGLHKARKAPQYSKR) is disordered. Over residues 100 to 118 (PDNRPPLKTEGYLTRDPRA) the composition is skewed to basic and acidic residues. Over residues 119 to 138 (KERKKYGLHKARKAPQYSKR) the composition is skewed to basic residues.

It belongs to the universal ribosomal protein uS9 family.

This is Small ribosomal subunit protein uS9 from Nostoc punctiforme (strain ATCC 29133 / PCC 73102).